A 312-amino-acid chain; its full sequence is MNSADTQEPKSFNHTDMWTAFGTTMSGALETDPRAVVVLADIGAHLFKAAAIADPNRVINVGIREQLMMGVAGGLAMCGMRPVVHTVAAFLVERPLEQIKLNFAQQDVGAVLVSWGASYDLSEFAFSHFTPGDITVIDSMPNWTVHVPGHPQEAADLLLESLPGDGRVYLRLSSQVNRYPHAVRGTSFTPIKYGTRGVVLAVGPCLDAVLSATSMLDVTILYAATIRPFDATGLCAAVQAVNRPNVVLVEPYLAGTSAHQVSSSLVSHPHRLLSLGVRREMEDRHYGTPDDHDHIHGLDARSLSNSINSFLG.

An N-terminal signal peptide occupies residues 1–28 (MNSADTQEPKSFNHTDMWTAFGTTMSGA).

In terms of biological role, the FAS-operon encodes genes involved in cytokinin production and in host plant fasciation (leafy gall). This is an uncharacterized protein from Rhodococcoides fascians (Rhodococcus fascians).